Here is a 150-residue protein sequence, read N- to C-terminus: Probable FKBP-type 16 kDa peptidyl-prolyl cis-trans isomerase (150 aa).

The 75-residue stretch at 14–88 folds into the PPIase FKBP-type domain; the sequence is NTEVTLHFAL…PNPQNVQIIP (75 aa).

It belongs to the FKBP-type PPIase family.

It carries out the reaction [protein]-peptidylproline (omega=180) = [protein]-peptidylproline (omega=0). In terms of biological role, PPIases accelerate the folding of proteins. The protein is Probable FKBP-type 16 kDa peptidyl-prolyl cis-trans isomerase (yaaD) of Pseudomonas fluorescens.